The primary structure comprises 303 residues: tRNA pseudouridine synthase B (303 aa).

Aspartate 47 functions as the Nucleophile in the catalytic mechanism.

The protein belongs to the pseudouridine synthase TruB family. Type 1 subfamily.

The catalysed reaction is uridine(55) in tRNA = pseudouridine(55) in tRNA. Its function is as follows. Responsible for synthesis of pseudouridine from uracil-55 in the psi GC loop of transfer RNAs. The chain is tRNA pseudouridine synthase B from Roseobacter denitrificans (strain ATCC 33942 / OCh 114) (Erythrobacter sp. (strain OCh 114)).